The sequence spans 221 residues: MGEKSRRKGPAPRHADGKLGRTCDHPYAPWSFTPSSRAPTAWVRPPCPVWASRLQEHSPEPRRARAPPTRRAQAALYAPALRLRDHLDRFSILMTSCTSWLQAPQAPGLCRDEQSSRISVPQLSGAPILLPDLEGTKLSNFQESSPLPHKHERKDKRSTPEEEGRSAPEKIIQSLKLCPGGHRPASLSSGCPAGCRLSFNLPPSMLLSVQKCCMPSSLKTC.

Over residues 1–11 the composition is skewed to basic residues; that stretch reads MGEKSRRKGPA. Disordered stretches follow at residues 1-23 and 139-169; these read MGEK…GRTC and SNFQ…SAPE. Basic and acidic residues-rich tracts occupy residues 13 to 23 and 155 to 168; these read RHADGKLGRTC and DKRS…RSAP.

This is an uncharacterized protein from Homo sapiens (Human).